Consider the following 752-residue polypeptide: Ribosomal RNA large subunit methyltransferase K/L (752 aa).

One can recognise a THUMP domain in the interval 53 to 164 (QMYKICLWTR…RDELHISIDL (112 aa)).

Belongs to the methyltransferase superfamily. RlmKL family.

The protein localises to the cytoplasm. It carries out the reaction guanosine(2445) in 23S rRNA + S-adenosyl-L-methionine = N(2)-methylguanosine(2445) in 23S rRNA + S-adenosyl-L-homocysteine + H(+). The enzyme catalyses guanosine(2069) in 23S rRNA + S-adenosyl-L-methionine = N(2)-methylguanosine(2069) in 23S rRNA + S-adenosyl-L-homocysteine + H(+). Functionally, specifically methylates the guanine in position 2445 (m2G2445) and the guanine in position 2069 (m7G2069) of 23S rRNA. The chain is Ribosomal RNA large subunit methyltransferase K/L from Saccharophagus degradans (strain 2-40 / ATCC 43961 / DSM 17024).